The following is a 351-amino-acid chain: MTDRKVALISGVTGQDGAYLAELLLDEGYIVHGIKRRSSSFNTQRIEHIYQERHDPEARFFLHYGDMTDSTNLLRIVQQTQPHEIYNLAAQSHVQVSFETPEYTANADAIGTLRMLEAIRILGLIHRTRFYQASTSELYGLAQEIPQNEKTPFYPRSPYAAAKLYAYWIVVNYREAYGMHASNGILFNHESPLRGETFVTRKITRAAAAISLGKQEVLYLGNLDAQRDWGHAREYVRGMWMMCQQDRPGDYVLATGVTTSVRTFVEWAFEETGMTIEWVGEGIEERGIDAATGKCVVAVDPRYFRPTEVDLLLGDATKARQVLGWRHETSVRDLACEMVREDLSYLRGTRQ.

Residues Gly-11–Asp-16, Asp-66–Met-67, Leu-88–Ser-92, and Tyr-103 each bind NADP(+). Thr-135 is a catalytic residue. Residues Glu-137 and Tyr-159 each act as nucleophile in the active site. NADP(+)-binding residues include Lys-163, His-189, and Arg-194.

Belongs to the NAD(P)-dependent epimerase/dehydratase family. GDP-mannose 4,6-dehydratase subfamily. The cofactor is NADP(+).

The enzyme catalyses GDP-alpha-D-mannose = GDP-4-dehydro-alpha-D-rhamnose + H2O. The protein operates within nucleotide-sugar biosynthesis; GDP-L-fucose biosynthesis via de novo pathway; GDP-L-fucose from GDP-alpha-D-mannose: step 1/2. Its function is as follows. Catalyzes the conversion of GDP-D-mannose to GDP-4-dehydro-6-deoxy-D-mannose. This Sinorhizobium fredii (strain HH103) protein is GDP-mannose 4,6-dehydratase.